A 146-amino-acid polypeptide reads, in one-letter code: Ribosomal RNA large subunit methyltransferase H (146 aa).

Residues Leu-60, Gly-93, and 112–117 (MGKMTL) each bind S-adenosyl-L-methionine.

The protein belongs to the RNA methyltransferase RlmH family. In terms of assembly, homodimer.

It is found in the cytoplasm. It catalyses the reaction pseudouridine(1915) in 23S rRNA + S-adenosyl-L-methionine = N(3)-methylpseudouridine(1915) in 23S rRNA + S-adenosyl-L-homocysteine + H(+). In terms of biological role, specifically methylates the pseudouridine at position 1915 (m3Psi1915) in 23S rRNA. This Koribacter versatilis (strain Ellin345) protein is Ribosomal RNA large subunit methyltransferase H.